The primary structure comprises 190 residues: dTTP/UTP pyrophosphatase (190 aa).

Asp-70 functions as the Proton acceptor in the catalytic mechanism.

The protein belongs to the Maf family. YhdE subfamily. A divalent metal cation serves as cofactor.

It localises to the cytoplasm. It catalyses the reaction dTTP + H2O = dTMP + diphosphate + H(+). It carries out the reaction UTP + H2O = UMP + diphosphate + H(+). In terms of biological role, nucleoside triphosphate pyrophosphatase that hydrolyzes dTTP and UTP. May have a dual role in cell division arrest and in preventing the incorporation of modified nucleotides into cellular nucleic acids. The polypeptide is dTTP/UTP pyrophosphatase (Paramagnetospirillum magneticum (strain ATCC 700264 / AMB-1) (Magnetospirillum magneticum)).